The following is a 565-amino-acid chain: Urease subunit beta (565 aa).

The 436-residue stretch at G130–I565 folds into the Urease domain. H135, H137, and K218 together coordinate Ni(2+). K218 carries the N6-carboxylysine modification. H220 contributes to the substrate binding site. The Ni(2+) site is built by H247 and H273. H321 acts as the Proton donor in catalysis. Position 361 (D361) interacts with Ni(2+).

The protein belongs to the metallo-dependent hydrolases superfamily. Urease alpha subunit family. In terms of assembly, heterohexamer of 3 UreA (alpha) and 3 UreB (beta) subunits. It depends on Ni cation as a cofactor. Post-translationally, carboxylation allows a single lysine to coordinate two nickel ions.

The protein resides in the cytoplasm. The catalysed reaction is urea + 2 H2O + H(+) = hydrogencarbonate + 2 NH4(+). Its pathway is nitrogen metabolism; urea degradation; CO(2) and NH(3) from urea (urease route): step 1/1. In Campylobacter lari, this protein is Urease subunit beta.